Here is a 440-residue protein sequence, read N- to C-terminus: MDRWQGIQHVVVVGLGITGLSVVNYLRKYHPSVTVQVIDTREAPPGQEQLSSDVALHRSGWNLEWLLNADLVVTNPGIALATPEIQQVLAAGIPVVGDIELFAWHVDTPVIAITGSNGKSTVTDLSGVLANAAGVKAAVGGNIGVPALDLISPDVELYVLELSSFQLETTSSLKLKAAAFLNLSEDHMDRYQGMEDYRQAKLRIFDHAETAVVNADDTQTFPDHAAHLQVVTFGVEQAAQFSLAQHQGREYLFARDEAVMACAELSLVGRHNVANVLTVLALLDSAGVNFRLALDALKSYTGLTHRCQVVADNHGIKWVNDSKATNVASTLAALSGLKIEGQLYLLVGGVGKGADFTPLAPVLATLPVQLCCFGVDGHQFMPLHPSARFYDSMESIIRSIRPQLKSGDMVLLSPACASFDQFKNFMARGDIFAQLARQYA.

Residue 115–121 (GSNGKST) participates in ATP binding.

The protein belongs to the MurCDEF family.

The protein resides in the cytoplasm. The catalysed reaction is UDP-N-acetyl-alpha-D-muramoyl-L-alanine + D-glutamate + ATP = UDP-N-acetyl-alpha-D-muramoyl-L-alanyl-D-glutamate + ADP + phosphate + H(+). Its pathway is cell wall biogenesis; peptidoglycan biosynthesis. Its function is as follows. Cell wall formation. Catalyzes the addition of glutamate to the nucleotide precursor UDP-N-acetylmuramoyl-L-alanine (UMA). The protein is UDP-N-acetylmuramoylalanine--D-glutamate ligase of Vibrio cholerae serotype O1 (strain ATCC 39315 / El Tor Inaba N16961).